We begin with the raw amino-acid sequence, 586 residues long: FAD-linked oxidoreductase orf1 (586 aa).

The signal sequence occupies residues 1 to 17 (MKSFATTVLLVTPGIYA). Residues Asn-29, Asn-51, Asn-79, Asn-110, Asn-146, Asn-188, Asn-314, Asn-321, Asn-358, Asn-402, Asn-434, and Asn-461 are each glycosylated (N-linked (GlcNAc...) asparagine). An FAD-binding PCMH-type domain is found at 124-303 (TLGNYVSYAI…LSMTAKVHPD (180 aa)).

The protein belongs to the oxygen-dependent FAD-linked oxidoreductase family.

It carries out the reaction betaenone C = betaenone A. Its pathway is mycotoxin biosynthesis. Functionally, FAD-linked oxidoreductase; part of the gene cluster that mediates the biosynthesis of betaenones, phytotoxic polyketides involved in leaf spot disease in sugar beets. The first step of the pathway is the synthesis of dehydroprobetaenone I by the polyketide synthase bet1 and the enoyl reductase bet3 via condensation of one acetyl-CoA starter unit with 7 malonyl-CoA units and 5 methylations. The C-terminal reductase (R) domain of bet1 catalyzes the reductive release of the polyketide chain. Because bet1 lacks a designated enoylreductase (ER) domain, the required activity is provided the enoyl reductase bet3. The short-chain dehydrogenase/reductase bet4 then catalyzes reduction of dehydroprobetaenone I to probetaenone I. The cytochrome P450 monooxygenase bet2 catalyzes successive epoxidation, oxidation (resulting from epoxide opening) and hydroxylation to install a tertiary alcohol in the decaline ring to yield betaenone C from dehydroprobetaenone I and betaenone B from probetaenone I. The FAD-linked oxidoreductase (orf1) is probably responsible for the conversion of betaenone C to betaenone A via an intramolecular aldol reaction between C-1 and C-17 to form the bridged tricyclic system in betaenone A. The polypeptide is FAD-linked oxidoreductase orf1 (Neocamarosporium betae (Beet black rot fungus)).